A 140-amino-acid chain; its full sequence is Small ribosomal subunit protein bS16 (140 aa).

Positions 86–140 (TVGKAKQAAKREEEAKQAAKEAAEAKAAAEAEAAAAAEAAKAEDAPDGETESSEG) are disordered. Over residues 94-114 (AKREEEAKQAAKEAAEAKAAA) the composition is skewed to basic and acidic residues. Residues 115-124 (EAEAAAAAEA) show a composition bias toward low complexity. Residues 130 to 140 (APDGETESSEG) are compositionally biased toward acidic residues.

It belongs to the bacterial ribosomal protein bS16 family.

In Parasynechococcus marenigrum (strain WH8102), this protein is Small ribosomal subunit protein bS16.